The primary structure comprises 287 residues: Probable aquaporin PIP1-4 (287 aa).

The residue at position 1 (methionine 1) is an N-acetylmethionine. Positions methionine 1–proline 36 are disordered. The Cytoplasmic portion of the chain corresponds to methionine 1–glycine 55. Residues isoleucine 56 to valine 76 form a helical membrane-spanning segment. Over lysine 77–alanine 92 the chain is Extracellular. The chain crosses the membrane as a helical span at residues tryptophan 93–histidine 113. The Cytoplasmic segment spans residues isoleucine 114–alanine 133. Positions asparagine 115–alanine 117 match the NPA 1 motif. Residues valine 134–phenylalanine 154 form a helical membrane-spanning segment. At glutamine 155–lysine 175 the chain is on the extracellular side. The helical transmembrane segment at glycine 176 to alanine 196 threads the bilayer. Residues threonine 197 to proline 209 are Cytoplasmic-facing. Residues isoleucine 210–isoleucine 230 traverse the membrane as a helical segment. Residues threonine 231–tryptophan 257 lie on the Extracellular side of the membrane. Residues asparagine 236–alanine 238 carry the NPA 2 motif. The chain crosses the membrane as a helical span at residues isoleucine 258 to isoleucine 278. The Cytoplasmic segment spans residues arginine 279–serine 287. Serine 285 is modified (phosphoserine).

Belongs to the MIP/aquaporin (TC 1.A.8) family. PIP (TC 1.A.8.11) subfamily. In terms of tissue distribution, predominantly expressed in roots and green siliques. Also expressed above ground and in flower buds.

It is found in the cell membrane. Its function is as follows. Aquaporins facilitate the transport of water and small neutral solutes across cell membranes. This chain is Probable aquaporin PIP1-4 (PIP1.4), found in Arabidopsis thaliana (Mouse-ear cress).